The sequence spans 495 residues: Ribosome biogenesis protein YTM1 (495 aa).

The interval 15–97 (VKVIFTTTEP…ETTLTLQYVR (83 aa)) is ubiquitin-like (UBL) domain. WD repeat units lie at residues 129–168 (WSSAANSSAAVQPGQERVLSASYDGLLRIWNASGSVIATS), 175–213 (GHTASIKAAKFLTSDRLASAGMDRTVRVWKYTESDHFTG), 223–262 (GHTGSVDWLDVDGHSKHILTASADGAIGFWSASKASAPEP), 264–295 (ASLLPGAHVSKRRKATSSVSTAQRGPLGLWSI), 296–337 (HTAP…STLT), 386–426 (GHAN…PATK), and 458–495 (GDGCKVFSVVWDKLGIFSGGEDKKVQVNRGRNIVTEQK).

Belongs to the WD repeat WDR12/YTM1 family. In terms of assembly, component of the NOP7 complex, composed of ERB1, NOP7 and YTM1. The complex is held together by ERB1, which interacts with NOP7 via its N-terminal domain and with YTM1 via a high-affinity interaction between the seven-bladed beta-propeller domains of the 2 proteins. The NOP7 complex associates with the 66S pre-ribosome. Interacts (via UBL domain) with MDN1 (via VWFA/MIDAS domain).

It localises to the nucleus. Its subcellular location is the nucleolus. It is found in the nucleoplasm. Functionally, component of the NOP7 complex, which is required for maturation of the 25S and 5.8S ribosomal RNAs and formation of the 60S ribosome. This Chaetomium thermophilum (strain DSM 1495 / CBS 144.50 / IMI 039719) (Thermochaetoides thermophila) protein is Ribosome biogenesis protein YTM1.